The primary structure comprises 410 residues: ORC1-type DNA replication protein 4 (410 aa).

ATP contacts are provided by residues 73-77 (TGKSL), Tyr-220, and Arg-232.

It belongs to the CDC6/cdc18 family.

In terms of biological role, involved in regulation of DNA replication. This chain is ORC1-type DNA replication protein 4 (orc4), found in Halobacterium salinarum (strain ATCC 700922 / JCM 11081 / NRC-1) (Halobacterium halobium).